The following is a 615-amino-acid chain: Prolycopene isomerase, chloroplastic (615 aa).

The transit peptide at 1–62 (MSTSIFETPL…PKPLNFGFCR (62 aa)) directs the protein to the chloroplast.

Belongs to the carotenoid/retinoid oxidoreductase family. CrtISO subfamily. The cofactor is NAD(+). NADP(+) serves as cofactor. FAD is required as a cofactor.

The protein resides in the plastid. The protein localises to the chloroplast membrane. It carries out the reaction 7,7',9,9'-tetra-cis-lycopene = all-trans-lycopene. It functions in the pathway carotenoid biosynthesis; lycopene biosynthesis. Functionally, carotene cis-trans-isomerase that converts 7,9,9'-tri-cis-neurosporene to 9'-cis-neurosporene and 7,9,9',7'-tetra-cis-lycopene (also known as prolycopene) into all-trans-lycopene. Isomerization requires redox-active components, suggesting that isomerization is achieved by a reversible redox reaction acting at specific double bonds. Isomerizes adjacent cis-double bonds at C7 and C9 pairwise into the trans-configuration, but is incapable of isomerizing single cis-double bonds at C9 and C9'. The polypeptide is Prolycopene isomerase, chloroplastic (CRTISO) (Daucus carota (Wild carrot)).